Consider the following 2522-residue polypeptide: Unconventional myosin-IXAa (2522 aa).

The region spanning S15–L113 is the Ras-associating domain. One can recognise a Myosin motor domain in the interval K147–H1007. A helical transmembrane segment spans residues I176–Y196. Residue G240–T247 coordinates ATP. The interval V767–S802 is disordered. Residues S777–N786 show a composition bias toward polar residues. The segment at L888 to S910 is actin-binding. 4 consecutive IQ domains span residues S1012–Q1039, Q1063–L1092, Q1102–R1131, and Q1125–K1154. The neck or regulatory domain stretch occupies residues S1012 to Q1149. The interval K1150 to R2497 is tail. 6 disordered regions span residues G1218–R1254, D1318–R1409, N1424–F1612, N1630–R1754, R1799–R1827, and L1962–D1983. The span at T1229 to Q1242 shows a compositional bias: basic and acidic residues. 2 stretches are compositionally biased toward polar residues: residues S1330–D1349 and S1366–T1390. Basic and acidic residues-rich tracts occupy residues P1399–R1408 and A1426–D1435. The segment covering A1437–S1454 has biased composition (polar residues). Residues V1456–E1525 are a coiled coil. Composition is skewed to basic and acidic residues over residues E1458–E1484, I1492–R1523, P1549–D1566, and L1580–S1589. Composition is skewed to polar residues over residues K1594–M1604 and Q1631–V1641. Residues P1656–R1665 are compositionally biased toward basic residues. Acidic residues predominate over residues G1681 to E1690. Basic and acidic residues-rich tracts occupy residues L1738–V1753 and L1810–P1822. The segment at G1990–C2039 adopts a Phorbol-ester/DAG-type zinc-finger fold. The 189-residue stretch at V2054–Y2242 folds into the Rho-GAP domain. Disordered regions lie at residues P2274–K2325 and L2348–V2522. The stretch at Q2317–E2344 forms a coiled coil. Residues T2366–D2383 show a composition bias toward polar residues. The segment covering S2413 to S2429 has biased composition (low complexity). The segment covering R2436–S2448 has biased composition (basic residues). Residues R2497–E2506 are compositionally biased toward basic and acidic residues.

The protein belongs to the TRAFAC class myosin-kinesin ATPase superfamily. Myosin family.

It is found in the membrane. It localises to the cytoplasm. Its subcellular location is the synapse. The protein resides in the cell projection. The protein localises to the growth cone. Functionally, myosins are actin-based motor molecules with ATPase activity. Unconventional myosins serve in intracellular movements. Regulates Rho by stimulating it's GTPase activity in neurons. Required for the regulation of neurite branching and motor neuron axon guidance. This Danio rerio (Zebrafish) protein is Unconventional myosin-IXAa (myo9aa).